The sequence spans 60 residues: Large ribosomal subunit protein bL32 (60 aa).

Residues 1-60 (MAVQQNKKSPSKRGMHRSHDFLVNPPTAIEPTTGESHLRHHISPNGFYRGRKILKTKADE) are disordered. Residues 49 to 60 (RGRKILKTKADE) are compositionally biased toward basic residues.

It belongs to the bacterial ribosomal protein bL32 family.

This is Large ribosomal subunit protein bL32 from Bordetella avium (strain 197N).